Reading from the N-terminus, the 240-residue chain is 1-(5-phosphoribosyl)-5-[(5-phosphoribosylamino)methylideneamino] imidazole-4-carboxamide isomerase (240 aa).

The Proton acceptor role is filled by Asp-8. Asp-129 acts as the Proton donor in catalysis.

It belongs to the HisA/HisF family.

The protein localises to the cytoplasm. It catalyses the reaction 1-(5-phospho-beta-D-ribosyl)-5-[(5-phospho-beta-D-ribosylamino)methylideneamino]imidazole-4-carboxamide = 5-[(5-phospho-1-deoxy-D-ribulos-1-ylimino)methylamino]-1-(5-phospho-beta-D-ribosyl)imidazole-4-carboxamide. The protein operates within amino-acid biosynthesis; L-histidine biosynthesis; L-histidine from 5-phospho-alpha-D-ribose 1-diphosphate: step 4/9. This is 1-(5-phosphoribosyl)-5-[(5-phosphoribosylamino)methylideneamino] imidazole-4-carboxamide isomerase from Listeria monocytogenes serotype 4b (strain F2365).